Here is a 234-residue protein sequence, read N- to C-terminus: Ribonuclease 3 (234 aa).

One can recognise an RNase III domain in the interval 4–133 (LLDLEHKLNY…ILGAVYIDSN (130 aa)). Glu-46 lines the Mg(2+) pocket. Residue Asp-50 is part of the active site. Mg(2+) is bound by residues Asp-119 and Glu-122. The active site involves Glu-122. The DRBM domain maps to 160 to 228 (DFKSILQEYV…AKALCIKLGV (69 aa)).

Belongs to the ribonuclease III family. In terms of assembly, homodimer. Mg(2+) is required as a cofactor.

The protein localises to the cytoplasm. It carries out the reaction Endonucleolytic cleavage to 5'-phosphomonoester.. Functionally, digests double-stranded RNA. Involved in the processing of primary rRNA transcript to yield the immediate precursors to the large and small rRNAs (23S and 16S). Processes some mRNAs, and tRNAs when they are encoded in the rRNA operon. Processes pre-crRNA and tracrRNA of type II CRISPR loci if present in the organism. In Fusobacterium nucleatum subsp. nucleatum (strain ATCC 25586 / DSM 15643 / BCRC 10681 / CIP 101130 / JCM 8532 / KCTC 2640 / LMG 13131 / VPI 4355), this protein is Ribonuclease 3.